The following is a 286-amino-acid chain: ATP synthase gamma chain (286 aa).

It belongs to the ATPase gamma chain family. As to quaternary structure, F-type ATPases have 2 components, CF(1) - the catalytic core - and CF(0) - the membrane proton channel. CF(1) has five subunits: alpha(3), beta(3), gamma(1), delta(1), epsilon(1). CF(0) has three main subunits: a, b and c.

The protein localises to the cell membrane. Its function is as follows. Produces ATP from ADP in the presence of a proton gradient across the membrane. The gamma chain is believed to be important in regulating ATPase activity and the flow of protons through the CF(0) complex. The sequence is that of ATP synthase gamma chain from Bacillus mycoides (strain KBAB4) (Bacillus weihenstephanensis).